We begin with the raw amino-acid sequence, 485 residues long: Ribosomal protein uS12 methylthiotransferase RimO (485 aa).

An MTTase N-terminal domain is found at 14 to 124 (PKVGFISLGC…VMAHVRELLP (111 aa)). Residues Cys23, Cys59, Cys88, Cys167, Cys171, and Cys174 each coordinate [4Fe-4S] cluster. Residues 153–389 (LTPRHYAYVK…MEVAQRISRE (237 aa)) enclose the Radical SAM core domain. In terms of domain architecture, TRAM spans 392–468 (AEKVGRVLDV…EYDLYGEVIH (77 aa)).

It belongs to the methylthiotransferase family. RimO subfamily. [4Fe-4S] cluster serves as cofactor.

The protein localises to the cytoplasm. The enzyme catalyses L-aspartate(89)-[ribosomal protein uS12]-hydrogen + (sulfur carrier)-SH + AH2 + 2 S-adenosyl-L-methionine = 3-methylsulfanyl-L-aspartate(89)-[ribosomal protein uS12]-hydrogen + (sulfur carrier)-H + 5'-deoxyadenosine + L-methionine + A + S-adenosyl-L-homocysteine + 2 H(+). Functionally, catalyzes the methylthiolation of an aspartic acid residue of ribosomal protein uS12. This is Ribosomal protein uS12 methylthiotransferase RimO from Deinococcus geothermalis (strain DSM 11300 / CIP 105573 / AG-3a).